Reading from the N-terminus, the 456-residue chain is MICGSKNKSYLKSQNLKIFGQGKLNGIVEISGAKNSALVLLAASLLTNERIVLQNVPRLTDIEKMANILRNLGVKIVEKNNRLELDSQNISIKELPYELVNGLRASFFCIGPLLSKFGEAKVPLPGGCNIGSRPIDEHINGLKALGAEILIEEEIVKANIKGDKSRLIGTHIKLKCPSVGATETLIMAASLAEGRTTIENAAREPEIQDLCQMLNKMGAKIYDSGKEKIIIDGVNELCGCSHKVIPDRIEAGTFLIAAAATSSSITISPVIPNHLEAVTNKLQESGSKITIKGNSITINCNKIKGVDIETAPFPGFPTDLQAPFTTLMAIANGESKITETIFENRMNHVHLLNKMGANIKLNKNIAHIKGVKKFKGMDLVGSDLRTSAALIIAGIIAEGTSTISGLEHLDRGYENFESKLKILGIKITREFNKKTLKNKEFKTSSDPADIPRYKAA.

K34–N35 serves as a coordination point for phosphoenolpyruvate. Position 104 (R104) interacts with UDP-N-acetyl-alpha-D-glucosamine. The Proton donor role is filled by C128. The residue at position 128 (C128) is a 2-(S-cysteinyl)pyruvic acid O-phosphothioketal. Residues D319 and I341 each coordinate UDP-N-acetyl-alpha-D-glucosamine.

It belongs to the EPSP synthase family. MurA subfamily.

The protein resides in the cytoplasm. The catalysed reaction is phosphoenolpyruvate + UDP-N-acetyl-alpha-D-glucosamine = UDP-N-acetyl-3-O-(1-carboxyvinyl)-alpha-D-glucosamine + phosphate. The protein operates within cell wall biogenesis; peptidoglycan biosynthesis. Cell wall formation. Adds enolpyruvyl to UDP-N-acetylglucosamine. This is UDP-N-acetylglucosamine 1-carboxyvinyltransferase from Prochlorococcus marinus (strain MIT 9301).